Here is a 183-residue protein sequence, read N- to C-terminus: Phosphopantetheine adenylyltransferase (183 aa).

Residue serine 8 participates in substrate binding. Residues serine 8–phenylalanine 9 and histidine 16 contribute to the ATP site. Positions 40, 72, and 86 each coordinate substrate. ATP-binding positions include glycine 87–arginine 89, glutamate 97, and tyrosine 122–serine 128.

This sequence belongs to the bacterial CoaD family. In terms of assembly, homohexamer. Requires Mg(2+) as cofactor.

It localises to the cytoplasm. It carries out the reaction (R)-4'-phosphopantetheine + ATP + H(+) = 3'-dephospho-CoA + diphosphate. The protein operates within cofactor biosynthesis; coenzyme A biosynthesis; CoA from (R)-pantothenate: step 4/5. Reversibly transfers an adenylyl group from ATP to 4'-phosphopantetheine, yielding dephospho-CoA (dPCoA) and pyrophosphate. This Nostoc punctiforme (strain ATCC 29133 / PCC 73102) protein is Phosphopantetheine adenylyltransferase.